The primary structure comprises 278 residues: Digeranylgeranylglyceryl phosphate synthase (278 aa).

8 helical membrane-spanning segments follow: residues 15 to 35 (VIGSAISVFMGYVVASEWKIV), 36 to 56 (PIKLILAMIVVSVIAAGGYII), 89 to 109 (IVLFLVGIVLSVLLNIYAFII), 133 to 153 (LIVALTSALSAFYGGLAFFEG), 159 to 179 (TLIPTLYIFFFTLTREFVKGI), 203 to 223 (WFISKIILVILIVTSFIPYFF), 225 to 245 (FNIIYLIGILFLDIILILVVL), and 258 to 278 (AYMKVYALGTLILFALGTLPI).

This sequence belongs to the UbiA prenyltransferase family. DGGGP synthase subfamily. Requires Mg(2+) as cofactor.

The protein resides in the cell membrane. It catalyses the reaction sn-3-O-(geranylgeranyl)glycerol 1-phosphate + (2E,6E,10E)-geranylgeranyl diphosphate = 2,3-bis-O-(geranylgeranyl)-sn-glycerol 1-phosphate + diphosphate. The protein operates within membrane lipid metabolism; glycerophospholipid metabolism. Functionally, prenyltransferase that catalyzes the transfer of the geranylgeranyl moiety of geranylgeranyl diphosphate (GGPP) to the C2 hydroxyl of (S)-3-O-geranylgeranylglyceryl phosphate (GGGP). This reaction is the second ether-bond-formation step in the biosynthesis of archaeal membrane lipids. The polypeptide is Digeranylgeranylglyceryl phosphate synthase (Sulfurisphaera tokodaii (strain DSM 16993 / JCM 10545 / NBRC 100140 / 7) (Sulfolobus tokodaii)).